Here is a 221-residue protein sequence, read N- to C-terminus: Small ribosomal subunit protein uS3 (221 aa).

The KH type-2 domain occupies 39–108 (IRKFVKKELF…NILINIVEVK (70 aa)).

It belongs to the universal ribosomal protein uS3 family. Part of the 30S ribosomal subunit. Forms a tight complex with proteins S10 and S14.

In terms of biological role, binds the lower part of the 30S subunit head. Binds mRNA in the 70S ribosome, positioning it for translation. The polypeptide is Small ribosomal subunit protein uS3 (Clostridium botulinum (strain Alaska E43 / Type E3)).